The following is a 387-amino-acid chain: Colicin-N (387 aa).

Residues 1 to 11 show a composition bias toward polar residues; it reads MGSNGADNAHN. Residues 1–106 are disordered; that stretch reads MGSNGADNAH…ITITPDNSKP (106 aa). A compositionally biased stretch (gly residues) spans 14-30; that stretch reads FGGGKNPGIGNTSGAGS. Over residues 31–48 the composition is skewed to low complexity; sequence NGSASSNRGNSNGWSWSN. The span at 78–87 shows a compositional bias: gly residues; sequence GNSGNRGNNG. The next 2 helical transmembrane spans lie at 325–345 and 350–370; these read IIGG…LSFL and LAVT…SSFI.

This sequence belongs to the channel forming colicin family.

It localises to the cell membrane. This colicin is a channel-forming colicin. This class of transmembrane toxins depolarize the cytoplasmic membrane, leading to dissipation of cellular energy. Its function is as follows. Colicins are polypeptide toxins produced by and active against E.coli and closely related bacteria. The chain is Colicin-N (cna) from Escherichia coli.